The following is a 299-amino-acid chain: Porphobilinogen deaminase (299 aa).

The residue at position 242 (C242) is an S-(dipyrrolylmethanemethyl)cysteine.

The protein belongs to the HMBS family. As to quaternary structure, monomer. Dipyrromethane is required as a cofactor.

The enzyme catalyses 4 porphobilinogen + H2O = hydroxymethylbilane + 4 NH4(+). Its pathway is porphyrin-containing compound metabolism; protoporphyrin-IX biosynthesis; coproporphyrinogen-III from 5-aminolevulinate: step 2/4. Its function is as follows. Tetrapolymerization of the monopyrrole PBG into the hydroxymethylbilane pre-uroporphyrinogen in several discrete steps. In Rickettsia typhi (strain ATCC VR-144 / Wilmington), this protein is Porphobilinogen deaminase.